The following is a 113-amino-acid chain: uncharacterized protein (113 aa).

The signal sequence occupies residues 1-38 (MVKIERKATDSAYHEFTKILTSSAQLMAFLNQSDFVKA).

This is an uncharacterized protein from Haemophilus influenzae (strain ATCC 51907 / DSM 11121 / KW20 / Rd).